We begin with the raw amino-acid sequence, 138 residues long: Basic phospholipase A2 homolog MjTX-I (138 aa).

An N-terminal signal peptide occupies residues 1–16 (MRTLWIMAVLLVGVEG). Val-34 lines the suramin pocket. Intrachain disulfides connect Cys-42-Cys-132, Cys-44-Cys-60, Cys-59-Cys-111, Cys-65-Cys-138, Cys-66-Cys-104, Cys-73-Cys-97, and Cys-91-Cys-102. Asn-43 provides a ligand contact to varespladib. 2 residues coordinate suramin: Gly-45 and Gly-48. Residues His-63 and Lys-64 each coordinate varespladib. Position 85 (Lys-85) interacts with suramin.

The protein belongs to the phospholipase A2 family. Group II subfamily. K49 sub-subfamily. In terms of assembly, monomer in solution. Homodimer; non-covalently linked (probable conventional/extended dimer conformation). Homotetramer (dimer of homodimer (probable conventional/extended dimer conformation)); non-covalently linked. Homooligomer. In terms of tissue distribution, expressed by the venom gland.

Its subcellular location is the secreted. Its activity is regulated as follows. Myotoxin activity is inhibited by suramin and varespladib. Inhibition by suramin may be caused by (i) distortion of MDiS from both monomers impairing the membrane disruption mechanism by the toxin and (ii) surface electrostatic changes of the complex that interfere with the toxin membrane dockage process (putative-MDoS is partially hidden). Inhibition by varespladib is probably through varespladib binding to MDoS. Functionally, snake venom phospholipase A2 homolog that lacks enzymatic activity. In vivo, it displays local myotoxin and edema-inducing activities and is lethal by intraperitoneal injection. The myotoxicity effect is weaker in comparison to other myotoxins, probably due to the formation of high molecular weight complexes and to the oligomeric conformation (conventional dimer). It shows specificity toward neurons and myotubes, but not on a variety of other cell types. This PLA2 excites a cohort of sensory neurons via ATP release and consequent activation of P2RX2 and/or P2RX3 purinergic receptors. Pannexin hemichannels act as downstream mediators of toxin-evoked ATP release. In vivo, it elicits nonneurogenic inflammatory pain, thermal hyperalgesia, and mechanical allodynia, of which the latter is completely dependent on purinergic signaling. In Bothrops moojeni (Lance-headed viper), this protein is Basic phospholipase A2 homolog MjTX-I.